Here is a 212-residue protein sequence, read N- to C-terminus: Elongation factor Ts (212 aa).

The tract at residues 82 to 85 (SDFV) is involved in Mg(2+) ion dislocation from EF-Tu.

This sequence belongs to the EF-Ts family.

The protein localises to the cytoplasm. Associates with the EF-Tu.GDP complex and induces the exchange of GDP to GTP. It remains bound to the aminoacyl-tRNA.EF-Tu.GTP complex up to the GTP hydrolysis stage on the ribosome. This chain is Elongation factor Ts, found in Solibacter usitatus (strain Ellin6076).